The primary structure comprises 731 residues: 1,4-alpha-glucan branching enzyme GlgB (731 aa).

The active-site Nucleophile is the Asp-409. Catalysis depends on Glu-462, which acts as the Proton donor.

This sequence belongs to the glycosyl hydrolase 13 family. GlgB subfamily. As to quaternary structure, monomer.

It carries out the reaction Transfers a segment of a (1-&gt;4)-alpha-D-glucan chain to a primary hydroxy group in a similar glucan chain.. It functions in the pathway glycan biosynthesis; glycogen biosynthesis. In terms of biological role, catalyzes the formation of the alpha-1,6-glucosidic linkages in glycogen by scission of a 1,4-alpha-linked oligosaccharide from growing alpha-1,4-glucan chains and the subsequent attachment of the oligosaccharide to the alpha-1,6 position. The polypeptide is 1,4-alpha-glucan branching enzyme GlgB (glgB) (Dickeya chrysanthemi (Pectobacterium chrysanthemi)).